A 279-amino-acid polypeptide reads, in one-letter code: Cell death abnormality protein 2 (279 aa).

The 102-residue stretch at 14–115 (FYFPGMSREE…EASLLAAYKK (102 aa)) folds into the SH2 domain. The SH3 1 domain occupies 116-176 (PIIEVVVGTF…PANYVQIQME (61 aa)). The disordered stretch occupies residues 181–213 (RTSKGASQSSIGSSGGGAERFSSASTSSDNIEL). The segment covering 202–211 (SSASTSSDNI) has biased composition (polar residues). The region spanning 214–277 (QPRLPAKAKV…PHTYLRFTAV (64 aa)) is the SH3 2 domain.

This sequence belongs to the CRK family. In terms of assembly, interacts with ced-5 (via C-terminus which contains a candidate SH3-binding, proline-rich region). Forms a ternary complex with ced-5 and ced-12. Interacts (via SH2 domain) with src-1 (when activated and phosphorylated at 'Tyr-416').

Its function is as follows. Required for cell migration and engulfment of cell corpses but not for programmed cell death/apoptosis. Has a role in the migration of the 2 gonadal distal tip cells (DTCs). Plays a role in protecting dopaminergic neurons from oxidative stress-induced degeneration. The polypeptide is Cell death abnormality protein 2 (Caenorhabditis elegans).